Here is a 447-residue protein sequence, read N- to C-terminus: Probable glycine dehydrogenase (decarboxylating) subunit 1 (447 aa).

The protein belongs to the GcvP family. N-terminal subunit subfamily. As to quaternary structure, the glycine cleavage system is composed of four proteins: P, T, L and H. In this organism, the P 'protein' is a heterodimer of two subunits.

The enzyme catalyses N(6)-[(R)-lipoyl]-L-lysyl-[glycine-cleavage complex H protein] + glycine + H(+) = N(6)-[(R)-S(8)-aminomethyldihydrolipoyl]-L-lysyl-[glycine-cleavage complex H protein] + CO2. Its function is as follows. The glycine cleavage system catalyzes the degradation of glycine. The P protein binds the alpha-amino group of glycine through its pyridoxal phosphate cofactor; CO(2) is released and the remaining methylamine moiety is then transferred to the lipoamide cofactor of the H protein. This is Probable glycine dehydrogenase (decarboxylating) subunit 1 from Bacillus anthracis (strain A0248).